Consider the following 121-residue polypeptide: Chronic lymphocytic leukemia up-regulated protein 1 (121 aa).

As to expression, specifically expressed in chronic lymphocytic leukemia (CLL) cells from patients without immunoglobulin heavy-chain hypermutations. Expression is detected in all CLL cells and levels are similar in patients before and after treatment.

Its subcellular location is the cytoplasm. This Homo sapiens (Human) protein is Chronic lymphocytic leukemia up-regulated protein 1 (CLLU1).